A 179-amino-acid polypeptide reads, in one-letter code: MNAIKTAVAAVTAAASLVAFSPAEAATATANLNVTANVGGACSIGSGAGGGTLNFGTYDPVVVNSALGVDLFGTGSLSVQCTLLSTAVITLGQGLYPAAGSTAAVPLRRMRNAASTDYLSYFLYMDVTRLIAWGNTSGTGLPFLGLGLPVPVQVYGTVPRGQNVPSGTYNDTVVATITF.

Residues 1–25 (MNAIKTAVAAVTAAASLVAFSPAEA) form the signal peptide.

Its subcellular location is the secreted. It localises to the spore. It is found in the perispore. Its function is as follows. A late-developmental spore coat protein. The sequence is that of Protein U (pru) from Myxococcus xanthus.